The following is a 424-amino-acid chain: L-glutamine:2-deoxy-scyllo-inosose aminotransferase (424 aa).

Position 202 is an N6-(pyridoxal phosphate)lysine (Lys202).

The protein belongs to the DegT/DnrJ/EryC1 family. L-glutamine:2-deoxy-scyllo-inosose/scyllo-inosose aminotransferase subfamily. It depends on pyridoxal 5'-phosphate as a cofactor.

The enzyme catalyses 2-deoxy-L-scyllo-inosose + L-glutamine = 2-deoxy-scyllo-inosamine + 2-oxoglutaramate. It catalyses the reaction 3-amino-2,3-dideoxy-scyllo-inosose + L-glutamine = 2-deoxystreptamine + 2-oxoglutaramate. It participates in metabolic intermediate biosynthesis; 2-deoxystreptamine biosynthesis; 2-deoxystreptamine from D-glucose 6-phosphate: step 2/4. Its pathway is antibiotic biosynthesis; tobramycin biosynthesis. In terms of biological role, catalyzes the PLP-dependent transamination of 2-deoxy-scyllo-inosose (2-DOI) to form 2-deoxy-scyllo-inosamine (2-DOIA) using L-glutamine as the amino donor. Also catalyzes the transamination of 3-amino-2,3-dideoxy-scyllo-inosose (keto-2-DOIA) into 2-deoxystreptamine (2-DOS). This Streptoalloteichus tenebrarius (strain ATCC 17920 / DSM 40477 / JCM 4838 / CBS 697.72 / NBRC 16177 / NCIMB 11028 / NRRL B-12390 / A12253. 1 / ISP 5477) (Streptomyces tenebrarius) protein is L-glutamine:2-deoxy-scyllo-inosose aminotransferase (tbmB).